We begin with the raw amino-acid sequence, 311 residues long: Formimidoylglutamase (311 aa).

Residues H130, D155, H157, D159, C242, and D244 each coordinate Mn(2+).

It belongs to the arginase family. Mn(2+) serves as cofactor.

It carries out the reaction N-formimidoyl-L-glutamate + H2O = formamide + L-glutamate. It participates in amino-acid degradation; L-histidine degradation into L-glutamate; L-glutamate from N-formimidoyl-L-glutamate (hydrolase route): step 1/1. Its function is as follows. Catalyzes the conversion of N-formimidoyl-L-glutamate to L-glutamate and formamide. This Staphylococcus epidermidis (strain ATCC 35984 / DSM 28319 / BCRC 17069 / CCUG 31568 / BM 3577 / RP62A) protein is Formimidoylglutamase.